The primary structure comprises 338 residues: Glyceraldehyde-3-phosphate dehydrogenase (338 aa).

NAD(+) is bound by residues 12–13, Asp34, and Arg79; that span reads RI. D-glyceraldehyde 3-phosphate contacts are provided by residues 150 to 152, Thr181, 210 to 211, and Arg233; these read SCT and TG. Cys151 acts as the Nucleophile in catalysis. Asn315 is an NAD(+) binding site.

The protein belongs to the glyceraldehyde-3-phosphate dehydrogenase family. In terms of assembly, homotetramer.

Its subcellular location is the cytoplasm. The catalysed reaction is D-glyceraldehyde 3-phosphate + phosphate + NAD(+) = (2R)-3-phospho-glyceroyl phosphate + NADH + H(+). It participates in carbohydrate degradation; glycolysis; pyruvate from D-glyceraldehyde 3-phosphate: step 1/5. This chain is Glyceraldehyde-3-phosphate dehydrogenase (gpd-1), found in Neurospora crassa (strain ATCC 24698 / 74-OR23-1A / CBS 708.71 / DSM 1257 / FGSC 987).